Consider the following 216-residue polypeptide: Cyclic AMP receptor protein (216 aa).

Residue 6-126 coordinates a nucleoside 3',5'-cyclic phosphate; that stretch reads LFHGLAPEEV…HNLAALLARR (121 aa). 3',5'-cyclic AMP contacts are provided by residues 75–78 and 85–86; these read GEMS and RS. The HTH crp-type domain occupies 140–206; sequence EEARNRVAYA…PGTVEVREAA (67 aa). The segment at residues 166–185 is a DNA-binding region (H-T-H motif); it reads HHELAALAGTSRETVSRVLH.

Homodimer.

Functionally, activates transcription. Positively regulates six promoters upstream of the TTHB186, TTHB147, TTHB178, TTHB159, TTHA0771 and TTHA0176 genes in a cAMP-dependent manner. Regulated genes include clustered regularly interspaced short palindromic repeat (CRISPR) associated (Cas) genes, and the genes encoding a putative transcriptional regulator, a protein containing the exonuclease III-like domain of DNA polymerase, a GCN5-related acetyltransferase homolog, and some T.thermophilus-specific proteins of unknown function. The consensus DNA-binding site of this transcriptional regulator is 5'-(CT)NNG(G/T)(G/T)C(A/C)N(A/T)NNTCACAN(G/C)(G/C)-3' in which N is G, A, T or C. This chain is Cyclic AMP receptor protein, found in Thermus thermophilus (strain ATCC 27634 / DSM 579 / HB8).